The chain runs to 121 residues: Large ribosomal subunit protein uL22c (121 aa).

The protein belongs to the universal ribosomal protein uL22 family. As to quaternary structure, part of the 50S ribosomal subunit.

The protein resides in the plastid. Its subcellular location is the chloroplast. This protein binds specifically to 23S rRNA. Its function is as follows. The globular domain of the protein is located near the polypeptide exit tunnel on the outside of the subunit, while an extended beta-hairpin is found that lines the wall of the exit tunnel in the center of the 70S ribosome. The chain is Large ribosomal subunit protein uL22c (rpl22) from Welwitschia mirabilis (Tree tumbo).